Consider the following 1169-residue polypeptide: Polyamine-transporting ATPase 13A2 (1169 aa).

The Cytoplasmic portion of the chain corresponds to 1-44 (MSADSSLLMGSTPPSYGTLTTGTSIDPLSSSASSVRLSGYCGSP). An intramembrane segment occupies 45-65 (WRAIGYHAAVWMLAGIPWLLF). The Cytoplasmic portion of the chain corresponds to 66-225 (RWKPLWGVRL…ISIPVKSYLQ (160 aa)). A helical membrane pass occupies residues 226-246 (LLADEALNPYYGFQAFSIALW). Residues 247 to 250 (LADH) are Lumenal-facing. The chain crosses the membrane as a helical span at residues 251–271 (YYWYALCIFLISAISICLALY). Residues 272 to 422 (KTRKQSLTLR…SFKFYKHSMK (151 aa)) lie on the Cytoplasmic side of the membrane. Residues 423-443 (FVAALSVLALLGTVYSIIILY) traverse the membrane as a helical segment. The Lumenal portion of the chain corresponds to 444 to 458 (RNRVPVREIVIRALD). The chain crosses the membrane as a helical span at residues 459–479 (LVTVVVPPALPAAMTVCTLYA). The Cytoplasmic portion of the chain corresponds to 480-919 (QSRLRTQGIF…REGRCSLDTS (440 aa)). The 4-aspartylphosphate intermediate role is filled by Asp-508. 2 residues coordinate Mg(2+): Asp-867 and Asp-871. Residues 920–940 (FSVFKYMALYSLTQFISVLIL) traverse the membrane as a helical segment. Residues 941 to 946 (YTINTN) lie on the Lumenal side of the membrane. The helical transmembrane segment at 947 to 967 (LGDLQFLAIDLVITTTVAVLM) threads the bilayer. Over 968–993 (SRTGPALTLVRARPPGALLSVPVLGS) the chain is Cytoplasmic. The chain crosses the membrane as a helical span at residues 994 to 1014 (LLLQVALVAGIQLGGYFLVIA). The Lumenal segment spans residues 1015-1037 (QPWFVPLNRTVPAPDNLPNYENT). A glycan (N-linked (GlcNAc...) asparagine) is linked at Asn-1022. The helical transmembrane segment at 1038–1058 (VVFSLSGFQYLILAAAVSKGA) threads the bilayer. The Cytoplasmic portion of the chain corresponds to 1059 to 1069 (PFRQPLYTNVP). A helical membrane pass occupies residues 1070-1090 (FLVALALLGSVLVGLILVPGL). The Lumenal portion of the chain corresponds to 1091-1106 (LQGPLGLRNIVDSSFK). Residues 1107-1127 (LLLLGLVAFNFVGAFMLESVL) form a helical membrane-spanning segment. At 1128 to 1169 (DQCLPACLRWLRPKRASKKQFKRLQQELAEHPWPTLPVGSVR) the chain is on the cytoplasmic side.

Belongs to the cation transport ATPase (P-type) (TC 3.A.3) family. Type V subfamily. Interacts with MYCBP2; the interaction inhibits the ubiquitination of TSC2 by MYCBP2. Interacts with HDAC6; the interaction results in recruitment of HDAC6 to lysosomes to promote CTTN deacetylation. In terms of processing, autophosphorylated. Accumulates in an inactive autophosphorylated state and autophosphorylation is stimulated by phosphatidic acid and phosphatidylinositol 3,5-bisphosphate but not by Mn(2+) or Zn(2+). The presence of spermine results in a dose-dependent reduction in autophosphorylation.

Its subcellular location is the lysosome membrane. It localises to the late endosome membrane. The protein resides in the endosome. It is found in the multivesicular body membrane. The protein localises to the cytoplasmic vesicle. Its subcellular location is the autophagosome membrane. The catalysed reaction is spermidine(out) + ATP + H2O = spermidine(in) + ADP + phosphate + H(+). It catalyses the reaction spermine(out) + ATP + H2O = spermine(in) + ADP + phosphate + H(+). Accumulates in an inactive autophosphorylated state. The presence of spermine results in a dose-dependent reduction in autophosphorylation. ATPase which acts as a lysosomal polyamine exporter with high affinity for spermine. Also stimulates cellular uptake of polyamines and protects against polyamine toxicity. Plays a role in intracellular cation homeostasis and the maintenance of neuronal integrity. Contributes to cellular zinc homeostasis. Confers cellular protection against Mn(2+) and Zn(2+) toxicity and mitochondrial stress. Required for proper lysosomal and mitochondrial maintenance. Regulates the autophagy-lysosome pathway through the control of SYT11 expression at both transcriptional and post-translational levels. Facilitates recruitment of deacetylase HDAC6 to lysosomes to deacetylate CTTN, leading to actin polymerization, promotion of autophagosome-lysosome fusion and completion of autophagy. Promotes secretion of exosomes as well as secretion of SCNA via exosomes. Plays a role in lipid homeostasis. This chain is Polyamine-transporting ATPase 13A2, found in Mus musculus (Mouse).